The sequence spans 383 residues: MEKKTGLIQFLSEWKCVDDQPDHNRRLHYSRFALSPLLVDQAMTIGVAIRRALLSEVEGISIISANIVGAVHEYSTLDGVRESVDEILLNLKQIVIKGAKGASITPLDHKEYRASIFAQGPGVVTAEHIKFPSSILAVDPDQSIATLLNETQLCIELFIRQGIAKQLTRTKKNHQGFFIDANFTPVQKANFSIHSVGDPKGLQQLLLLEIWTNKTLTPAEALYQAHASLLNLFHQISPPLLHKELSPSKNILNQNSDSNSLGGSSFGRVVSLETRRDSTQTNNSSIPKEIQPSVRLKSYTDTNLSIDKQMNDSVNKENLSIDELELSPRISNCLKKANINTIADLLNYTQEDLLKIKNFGRKSVEQVSLVLRKRFNMELLPTK.

The tract at residues Met-1 to Leu-240 is alpha N-terminal domain (alpha-NTD). The segment at Ile-306 to Lys-383 is alpha C-terminal domain (alpha-CTD).

The protein belongs to the RNA polymerase alpha chain family. In terms of assembly, in plastids the minimal PEP RNA polymerase catalytic core is composed of four subunits: alpha, beta, beta', and beta''. When a (nuclear-encoded) sigma factor is associated with the core the holoenzyme is formed, which can initiate transcription.

Its subcellular location is the plastid. It localises to the chloroplast. It catalyses the reaction RNA(n) + a ribonucleoside 5'-triphosphate = RNA(n+1) + diphosphate. In terms of biological role, DNA-dependent RNA polymerase catalyzes the transcription of DNA into RNA using the four ribonucleoside triphosphates as substrates. The sequence is that of DNA-directed RNA polymerase subunit alpha from Staurastrum punctulatum (Green alga).